A 360-amino-acid polypeptide reads, in one-letter code: D-alanine--D-alanine ligase (360 aa).

The region spanning 134–343 (KILAQRVGVP…YTELITRLIQ (210 aa)) is the ATP-grasp domain. 169 to 224 (AEKLGHDMFVKPSNQGSSVGVNHVTNAEEYAAALEEAFKYDDKVLVEETVPGTEVE) is a binding site for ATP. Residues D297, E310, and N312 each coordinate Mg(2+).

It belongs to the D-alanine--D-alanine ligase family. Requires Mg(2+) as cofactor. The cofactor is Mn(2+).

Its subcellular location is the cytoplasm. The catalysed reaction is 2 D-alanine + ATP = D-alanyl-D-alanine + ADP + phosphate + H(+). It participates in cell wall biogenesis; peptidoglycan biosynthesis. Cell wall formation. This Lactobacillus acidophilus (strain ATCC 700396 / NCK56 / N2 / NCFM) protein is D-alanine--D-alanine ligase.